The primary structure comprises 667 residues: MKFINGILFNENFKDFYSNFKNPFGESEFVFGSAVNEILKTQNRVIVAELGFGLGRNFLNIAAKFKNSDKILHFVSIEKFPLQKEILAKFYENFKFEGAKKLLKLYPTLESGFHRIKFSKNITLDLLFGDAECVLKECEFKADIWLMDGFSPSKNPDMWSDEITSQIARLCRIKAKIATYSASKKVQKSLENAGFCVVKTPGFNGKREMIRAYFNGNSGEIKDYFFERPSFKSGKNVLIIGAGIAGIVTAIKFQNLGYKTVIAEKACSVAANASGNFCGVLEPLITKKGVKLGEMHKYAFKMAVKFYKKNVPKNLAKFCGAKEFAYNDDILKRFETHDKSEIFDFNRKDLPYASIFIKNAALLRPRKICEFFSKKLNIKFGYEFSDFVESNGGYIVNFVGKKPLKCDILIFAMGSESEELFGGGKNVRANFDDAMQISSVRGQITLLRPFLKTPIPLGARGYICPKIGKRQLIGATYDRKDYENQARTFDDERNLQNVAELLNKNFVKNTDTRNLNDKKFKFEILDKNVDFNVSKQNLNFKMHTQNKELAFKNQILNVKILGSRVGFRGYSGDRFPLIGALPDCEYFKEKYKILPWQKNRAKNLPPKYLKNIYINTSHGARGLCTAILGAEILADLVTNRPFCLPKSLINELAPSRFLIRKLKKGLK.

Positions 1-215 (MKFINGILFN…KREMIRAYFN (215 aa)) are tRNA (mnm(5)s(2)U34)-methyltransferase. Positions 240–667 (IGAGIAGIVT…LIRKLKKGLK (428 aa)) are FAD-dependent cmnm(5)s(2)U34 oxidoreductase.

In the N-terminal section; belongs to the methyltransferase superfamily. tRNA (mnm(5)s(2)U34)-methyltransferase family. The protein in the C-terminal section; belongs to the DAO family. FAD is required as a cofactor.

It is found in the cytoplasm. It carries out the reaction 5-aminomethyl-2-thiouridine(34) in tRNA + S-adenosyl-L-methionine = 5-methylaminomethyl-2-thiouridine(34) in tRNA + S-adenosyl-L-homocysteine + H(+). In terms of biological role, catalyzes the last two steps in the biosynthesis of 5-methylaminomethyl-2-thiouridine (mnm(5)s(2)U) at the wobble position (U34) in tRNA. Catalyzes the FAD-dependent demodification of cmnm(5)s(2)U34 to nm(5)s(2)U34, followed by the transfer of a methyl group from S-adenosyl-L-methionine to nm(5)s(2)U34, to form mnm(5)s(2)U34. In Campylobacter hominis (strain ATCC BAA-381 / DSM 21671 / CCUG 45161 / LMG 19568 / NCTC 13146 / CH001A), this protein is tRNA 5-methylaminomethyl-2-thiouridine biosynthesis bifunctional protein MnmC.